Reading from the N-terminus, the 332-residue chain is DNA-directed RNA polymerase subunit alpha (332 aa).

The alpha N-terminal domain (alpha-NTD) stretch occupies residues 1–232; sequence MKGYLKDFLK…DQLSVFVDLE (232 aa). The interval 247-332 is alpha C-terminal domain (alpha-CTD); it reads IDPVLLRPID…SLGDRARIAG (86 aa).

This sequence belongs to the RNA polymerase alpha chain family. Homodimer. The RNAP catalytic core consists of 2 alpha, 1 beta, 1 beta' and 1 omega subunit. When a sigma factor is associated with the core the holoenzyme is formed, which can initiate transcription.

It carries out the reaction RNA(n) + a ribonucleoside 5'-triphosphate = RNA(n+1) + diphosphate. DNA-dependent RNA polymerase catalyzes the transcription of DNA into RNA using the four ribonucleoside triphosphates as substrates. The protein is DNA-directed RNA polymerase subunit alpha of Halorhodospira halophila (strain DSM 244 / SL1) (Ectothiorhodospira halophila (strain DSM 244 / SL1)).